The primary structure comprises 218 residues: Transmembrane gamma-carboxyglutamic acid protein 1 (218 aa).

Residues 1-20 (MGRIFLTGEKANSVLKRYPR) constitute a propeptide that is removed on maturation. The region spanning 20-66 (RANGLFEEIRQGNIERECKEEVCTFEEAREAFENNEKTKEFWNTYTK) is the Gla domain. At 21–80 (ANGLFEEIRQGNIERECKEEVCTFEEAREAFENNEKTKEFWNTYTKAQQGESNRGSDWFQ) the chain is on the extracellular side. Cys-37 and Cys-42 are joined by a disulfide. A helical transmembrane segment spans residues 81–101 (FYLTFPLIFGLFIILLVIFLI). Topologically, residues 102 to 218 (WRCFLRNKTR…AMVPVATTIK (117 aa)) are cytoplasmic. The tract at residues 160-192 (STRLSNCDPPPTYEEATGQMNLRRSETEPHLDP) is disordered. A compositionally biased stretch (basic and acidic residues) spans 182–192 (RRSETEPHLDP).

Post-translationally, gla residues are produced after subsequent post-translational modifications of glutamate by a vitamin K-dependent gamma-carboxylase.

Its subcellular location is the membrane. This chain is Transmembrane gamma-carboxyglutamic acid protein 1 (PRRG1), found in Bos taurus (Bovine).